The chain runs to 123 residues: MPKKSGSASGRNLRIADQIQRDLAELIQREIKNPAMGLVTLQSVSLTPDYAHAKIYFTVLGAEPDAAAAILNEKAGYLHSLLFKRLHIHTVPTLHFHYDGSVERGIEMSRLIDQANASRAKDD.

This sequence belongs to the RbfA family. Monomer. Binds 30S ribosomal subunits, but not 50S ribosomal subunits or 70S ribosomes.

Its subcellular location is the cytoplasm. In terms of biological role, one of several proteins that assist in the late maturation steps of the functional core of the 30S ribosomal subunit. Associates with free 30S ribosomal subunits (but not with 30S subunits that are part of 70S ribosomes or polysomes). Required for efficient processing of 16S rRNA. May interact with the 5'-terminal helix region of 16S rRNA. This chain is Ribosome-binding factor A, found in Ralstonia nicotianae (strain ATCC BAA-1114 / GMI1000) (Ralstonia solanacearum).